Consider the following 794-residue polypeptide: MEEDLFSLAAGKQPSQQATNETAPRAGEARENAGTDHPGNAEDPAHRRIDYLRSELRRHNRLYYEQAEPEISDAEYDALFLELEKLEKAHPELSDPDSPTRRVGGAPLQGFNQIRHAVPMLSIDDIFEQRDAPVPDEELAEFYHKLSRALQTENVPVSVEPKIDGVALSIMYRNGKLAYAATRGDGDVGDDVTANVRTIRSVPLTLPPGAPPVLEVRGEVFMPNEAFAKLNEERDADGLPAFANPRNATAGTLKQLDPRQVAARPLAFLAHGLGAYEGPELRDAKDFWNMLRHCGIPCNEPVYYTDSLESTRQAVRDIDRLRHTLPYGTDGAVIKISSTATREALGATARAPRWAAAYKFPPEQKETTLLNIVVQVGRTGVLTPVAELQPVLLSGSTVARATLHNQDEIDRKDVRIGDTVLVEKAGEIIPAVLKVNLSKRPQDARPYSILEATKGLCPACGNPIMKEEGKVAWRCTNFTCPAQAVTGITHFCSRSALDVESIGSSVAEALRSSGLASSALDLFSLMPDQLANLNLGTPEEPRRYGEKNARKALDALQNARGLPLERWLIAFGIPLVGEVVAKALADTHPDLKHVADSPYLRDIVRLDELVEQAAKTNPNTRENKKAVKEGALSAEAVQERHQELMEEIDRLTAPYLATGYLRKNTAKFSYGSEIGVAAAKSLRSFFASAAGNHTMDVLHRLGINPQSQSYRASLLEIPAGSLSGKTFVITGTLSHPRDYFEQLIASHGGKATGAISKSTSCLLAGNGGGSKRDKALKLGVPVISEEDFYKMIGN.

The segment at Met-1–Arg-47 is disordered. Positions Gln-13–Thr-22 are enriched in polar residues. Over residues Gly-27–Arg-47 the composition is skewed to basic and acidic residues. Residues Asp-73 to Asp-77, Ser-122 to Ile-123, and Glu-160 each bind NAD(+). Lys-162 functions as the N6-AMP-lysine intermediate in the catalytic mechanism. NAD(+) is bound by residues Arg-183, Glu-219, Lys-335, and Lys-359. Positions 457, 460, 475, and 480 each coordinate Zn(2+). The 78-residue stretch at Ile-717–Asn-794 folds into the BRCT domain.

Belongs to the NAD-dependent DNA ligase family. LigA subfamily. The cofactor is Mg(2+). Requires Mn(2+) as cofactor.

It catalyses the reaction NAD(+) + (deoxyribonucleotide)n-3'-hydroxyl + 5'-phospho-(deoxyribonucleotide)m = (deoxyribonucleotide)n+m + AMP + beta-nicotinamide D-nucleotide.. Its function is as follows. DNA ligase that catalyzes the formation of phosphodiester linkages between 5'-phosphoryl and 3'-hydroxyl groups in double-stranded DNA using NAD as a coenzyme and as the energy source for the reaction. It is essential for DNA replication and repair of damaged DNA. This chain is DNA ligase, found in Akkermansia muciniphila (strain ATCC BAA-835 / DSM 22959 / JCM 33894 / BCRC 81048 / CCUG 64013 / CIP 107961 / Muc).